Reading from the N-terminus, the 611-residue chain is Elongation factor 4 (611 aa).

The region spanning 11–193 is the tr-type G domain; it reads EKIRNFSIIA…QVVEYVPAPS (183 aa). GTP-binding positions include 23-28 and 140-143; these read DHGKST and NKID.

It belongs to the TRAFAC class translation factor GTPase superfamily. Classic translation factor GTPase family. LepA subfamily.

Its subcellular location is the cell membrane. The catalysed reaction is GTP + H2O = GDP + phosphate + H(+). Required for accurate and efficient protein synthesis under certain stress conditions. May act as a fidelity factor of the translation reaction, by catalyzing a one-codon backward translocation of tRNAs on improperly translocated ribosomes. Back-translocation proceeds from a post-translocation (POST) complex to a pre-translocation (PRE) complex, thus giving elongation factor G a second chance to translocate the tRNAs correctly. Binds to ribosomes in a GTP-dependent manner. This Enterococcus faecalis (strain ATCC 700802 / V583) protein is Elongation factor 4.